A 745-amino-acid polypeptide reads, in one-letter code: Isocitrate dehydrogenase [NADP] 2 (745 aa).

Asn87 and Ser89 together coordinate NADP(+). Residues Ser134, Asn137, Arg141, Arg147, and Lys257 each contribute to the D-threo-isocitrate site. Asp352 is a binding site for Mg(2+). Residues Tyr422 and Arg550 each contribute to the D-threo-isocitrate site. Mg(2+) contacts are provided by Asp551 and Asp555. 7 residues coordinate NADP(+): Gly587, Ser588, Ala589, His592, Arg603, Asp605, and Arg652.

It belongs to the monomeric-type IDH family. May form homotrimers. Also forms homotetramers at low salt concentration, which are dissociated into homodimers, but not into monomers, at high salt concentration (1 M). The cofactor is Mg(2+).

It catalyses the reaction D-threo-isocitrate + NADP(+) = 2-oxoglutarate + CO2 + NADPH. Catalyzes the oxidative decarboxylation of isocitrate to 2-oxoglutarate and carbon dioxide with the concomitant reduction of NADP(+). Cannot use NAD(+). This Mycobacterium tuberculosis (strain ATCC 25618 / H37Rv) protein is Isocitrate dehydrogenase [NADP] 2.